Consider the following 297-residue polypeptide: Bax inhibitor 1 (297 aa).

The Lumenal segment spans residues 1-53 (MSGPPPPYEEQSSHLYGQPASSQDGNAFIPEDFKYSTVVISCEPIIRQRFMHK). The helical transmembrane segment at 54–74 (VYSLLSCQLLASLSFCYWASV) threads the bilayer. Over 75–85 (STSLQNFIMSH) the chain is Cytoplasmic. Residues 86–106 (IALFYICMVVSLVSCIWLAVS) form a helical membrane-spanning segment. The Lumenal portion of the chain corresponds to 107–146 (PRPEDYEASVPEPLLTGSSEEPAQEQRRLPWYVLSSYKQK). The helical transmembrane segment at 147-167 (LTLLSIFTLSEAYCLSLVTLA) threads the bilayer. Topologically, residues 168 to 171 (YDKD) are cytoplasmic. Residues 172 to 192 (TVLSALLITTIVVVGVSLTAL) traverse the membrane as a helical segment. Over 193 to 208 (SERFENVLNSATSIYY) the chain is Lumenal. A helical membrane pass occupies residues 209 to 229 (WLNWGLWIMIGMGLTALLFGW). Topologically, residues 230–239 (NTHSSKFNLL) are cytoplasmic. Residues 240–260 (YGWLGAILFTAYLFIDTQLIF) traverse the membrane as a helical segment. Topologically, residues 261-270 (RKVYPDEEVR) are lumenal. The helical transmembrane segment at 271-291 (CAMMLYLDIVNLFLSILRILA) threads the bilayer. Residues 292–297 (NSNDDN) are Cytoplasmic-facing.

Belongs to the BI1 family. LFG subfamily.

The protein resides in the endoplasmic reticulum membrane. Its subcellular location is the vacuole membrane. It is found in the mitochondrion membrane. Links the unfolded protein response and programmed cell death and mediates mitochondrial-dependent apoptosis. Induces cell death and disruption of the mitochondrial transmembrane potential via the mitochondrial phosphate carrier MIR1. Dispensible for starvation-induced autophagy. The sequence is that of Bax inhibitor 1 (BXI1) from Saccharomyces cerevisiae (strain ATCC 204508 / S288c) (Baker's yeast).